The following is a 360-amino-acid chain: Phosphoserine aminotransferase (360 aa).

Arginine 41 is an L-glutamate binding site. Pyridoxal 5'-phosphate contacts are provided by tryptophan 101, threonine 152, aspartate 172, and glutamine 195. Lysine 196 is subject to N6-(pyridoxal phosphate)lysine. 237–238 (NT) is a binding site for pyridoxal 5'-phosphate.

The protein belongs to the class-V pyridoxal-phosphate-dependent aminotransferase family. SerC subfamily. As to quaternary structure, homodimer. It depends on pyridoxal 5'-phosphate as a cofactor.

The protein resides in the cytoplasm. It carries out the reaction O-phospho-L-serine + 2-oxoglutarate = 3-phosphooxypyruvate + L-glutamate. The enzyme catalyses 4-(phosphooxy)-L-threonine + 2-oxoglutarate = (R)-3-hydroxy-2-oxo-4-phosphooxybutanoate + L-glutamate. The protein operates within amino-acid biosynthesis; L-serine biosynthesis; L-serine from 3-phospho-D-glycerate: step 2/3. It functions in the pathway cofactor biosynthesis; pyridoxine 5'-phosphate biosynthesis; pyridoxine 5'-phosphate from D-erythrose 4-phosphate: step 3/5. In terms of biological role, catalyzes the reversible conversion of 3-phosphohydroxypyruvate to phosphoserine and of 3-hydroxy-2-oxo-4-phosphonooxybutanoate to phosphohydroxythreonine. The polypeptide is Phosphoserine aminotransferase (Burkholderia multivorans (strain ATCC 17616 / 249)).